We begin with the raw amino-acid sequence, 156 residues long: MNINATLLGQAISFALFVWFCMKYVWPPLMQAIEERQKKIADGLQAAERAAKDLDLAQANASDQMKEAKRTATEIIDQANKRKSQIIDEAREEAQAERQKILAQAEAELEAERNRARDELRKQVATLAVAGAEKILERTIDKDAQKDILDNITAKL.

Residues Leu-7–Leu-29 form a helical membrane-spanning segment.

The protein belongs to the ATPase B chain family. F-type ATPases have 2 components, F(1) - the catalytic core - and F(0) - the membrane proton channel. F(1) has five subunits: alpha(3), beta(3), gamma(1), delta(1), epsilon(1). F(0) has three main subunits: a(1), b(2) and c(10-14). The alpha and beta chains form an alternating ring which encloses part of the gamma chain. F(1) is attached to F(0) by a central stalk formed by the gamma and epsilon chains, while a peripheral stalk is formed by the delta and b chains.

Its subcellular location is the cell inner membrane. In terms of biological role, f(1)F(0) ATP synthase produces ATP from ADP in the presence of a proton or sodium gradient. F-type ATPases consist of two structural domains, F(1) containing the extramembraneous catalytic core and F(0) containing the membrane proton channel, linked together by a central stalk and a peripheral stalk. During catalysis, ATP synthesis in the catalytic domain of F(1) is coupled via a rotary mechanism of the central stalk subunits to proton translocation. Its function is as follows. Component of the F(0) channel, it forms part of the peripheral stalk, linking F(1) to F(0). The chain is ATP synthase subunit b 1 from Vibrio campbellii (strain ATCC BAA-1116).